Consider the following 205-residue polypeptide: Ribosomal RNA small subunit methyltransferase G (205 aa).

S-adenosyl-L-methionine is bound by residues glycine 76, leucine 81, 127–128 (IE), and arginine 140.

Belongs to the methyltransferase superfamily. RNA methyltransferase RsmG family.

The protein resides in the cytoplasm. The enzyme catalyses guanosine(527) in 16S rRNA + S-adenosyl-L-methionine = N(7)-methylguanosine(527) in 16S rRNA + S-adenosyl-L-homocysteine. Its function is as follows. Specifically methylates the N7 position of guanine in position 527 of 16S rRNA. In Francisella tularensis subsp. tularensis (strain WY96-3418), this protein is Ribosomal RNA small subunit methyltransferase G.